Reading from the N-terminus, the 821-residue chain is Bifunctional dethiobiotin synthetase/7,8-diamino-pelargonic acid aminotransferase, mitochondrial (821 aa).

The tract at residues 28–283 is dethiobiotin synthetase; it reads SPAFAVFGAN…VHVLPPIPED (256 aa). 39-44 contributes to the ATP binding site; it reads GVGKTL. Thr43 serves as a coordination point for Mg(2+). Position 72 (Thr72) interacts with substrate. Glu194 contacts Mg(2+). 194-197 serves as a coordination point for ATP; it reads ETAG. A 7,8-diamino-pelargonic acid aminotransferase region spans residues 316-820; it reads RLNSMQRKSK…AKVHRRLQKL (505 aa). 374 to 375 serves as a coordination point for (8S)-8-amino-7-oxononanoate; that stretch reads WW. Position 436–437 (436–437) interacts with pyridoxal 5'-phosphate; the sequence is GS. Tyr482 serves as a coordination point for (8S)-8-amino-7-oxononanoate. Residue Asp626 participates in pyridoxal 5'-phosphate binding. (8S)-8-amino-7-oxononanoate contacts are provided by Lys655 and Gly689. Lys655 bears the N6-(pyridoxal phosphate)lysine mark. Residue Ser691 participates in pyridoxal 5'-phosphate binding. A (8S)-8-amino-7-oxononanoate-binding site is contributed by Arg787.

It in the N-terminal section; belongs to the dethiobiotin synthetase family. The protein in the C-terminal section; belongs to the class-III pyridoxal-phosphate-dependent aminotransferase family. BioA subfamily. Requires Mg(2+) as cofactor. It depends on pyridoxal 5'-phosphate as a cofactor.

It localises to the mitochondrion. It carries out the reaction (7R,8S)-7,8-diammoniononanoate + CO2 + ATP = (4R,5S)-dethiobiotin + ADP + phosphate + 3 H(+). The catalysed reaction is (8S)-8-amino-7-oxononanoate + S-adenosyl-L-methionine = S-adenosyl-4-methylsulfanyl-2-oxobutanoate + (7R,8S)-7,8-diammoniononanoate. The protein operates within cofactor biosynthesis; biotin biosynthesis; biotin from 7,8-diaminononanoate: step 1/2. It participates in cofactor biosynthesis; biotin biosynthesis; 7,8-diaminononanoate from 8-amino-7-oxononanoate (SAM route): step 1/1. Functionally, bifunctional enzyme that catalyzes two different reactions involved in the biotin biosynthesis. Catalyzes a mechanistically unusual reaction, the ATP-dependent insertion of CO2 between the N7 and N8 nitrogen atoms of 7,8-diaminopelargonic acid (DAPA) to form an ureido ring. Its function is as follows. Catalyzes the transfer of the alpha-amino group from S-adenosyl-L-methionine (SAM) to 7-keto-8-aminopelargonic acid (KAPA) to form 7,8-diaminopelargonic acid (DAPA). It is the only aminotransferase known to utilize SAM as an amino donor. The protein is Bifunctional dethiobiotin synthetase/7,8-diamino-pelargonic acid aminotransferase, mitochondrial (BIO3-BIO1) of Oryza sativa subsp. japonica (Rice).